We begin with the raw amino-acid sequence, 231 residues long: MKLGKKYKESTKLIDRKTLYTPLEAMELALKTAKANFDETIELSIKLGVDPRHADQQVRGAVVLPHGTGKKVRVLVLAKGDRIKEAEDAGADYVGAEEYVEKIQKENWFDFDVVVATPDMMGVVGRLGRILGPKGLMPNPKSGTVTFDVAKAIQEIKAGKVEYRVDKTSIVHVPIGKKSFEVQKLLDNFRVLMEAIIKAKPSAAKGQYLKSVAVSSTMGPGIKINSVKVLE.

It belongs to the universal ribosomal protein uL1 family. Part of the 50S ribosomal subunit.

Its function is as follows. Binds directly to 23S rRNA. The L1 stalk is quite mobile in the ribosome, and is involved in E site tRNA release. Functionally, protein L1 is also a translational repressor protein, it controls the translation of the L11 operon by binding to its mRNA. The chain is Large ribosomal subunit protein uL1 from Clostridium kluyveri (strain NBRC 12016).